Reading from the N-terminus, the 388-residue chain is Carbohydrate sulfotransferase 4 (388 aa).

At 1 to 7 (MMLLKKG) the chain is on the cytoplasmic side. A helical; Signal-anchor for type II membrane protein membrane pass occupies residues 8–28 (RLLMFLGSQVIVVALFIHMSV). At 29 to 388 (HRHLSQREES…HILGQVFREG (360 aa)) the chain is on the lumenal side. Residues 50 to 56 (WRSGSSF) and 204 to 212 (RDPRAVFRS) contribute to the 3'-phosphoadenylyl sulfate site. N-linked (GlcNAc...) asparagine glycosylation is found at Asn307, Asn328, and Asn369.

This sequence belongs to the sulfotransferase 1 family. Gal/GlcNAc/GalNAc subfamily. As to quaternary structure, monomer. Specifically expressed in high endothelial venules (HEV) of peripheral lymph nodes.

It is found in the golgi apparatus membrane. It catalyses the reaction 3-O-{N-acetyl-beta-D-glucosaminyl-(1-&gt;3)-beta-D-galactosyl-(1-&gt;3)-N-acetyl-alpha-D-galactosaminyl}-L-threonyl-[protein] + 3'-phosphoadenylyl sulfate = 3-O-{6-O-sulfo-N-acetyl-beta-D-glucosaminyl-(1-&gt;3)-beta-D-galactosyl-(1-&gt;3)-N-acetyl-alpha-D-galactosaminyl}-L-threonyl-[protein] + adenosine 3',5'-bisphosphate + H(+). The catalysed reaction is 3-O-{N-acetyl-beta-D-glucosaminyl-(1-&gt;3)-beta-D-galactosyl-(1-&gt;3)-N-acetyl-alpha-D-galactosaminyl}-L-seryl-[protein] + 3'-phosphoadenylyl sulfate = 3-O-{6-O-sulfo-N-acetyl-beta-D-glucosaminyl-(1-&gt;3)-beta-D-galactosyl-(1-&gt;3)-N-acetyl-alpha-D-galactosaminyl}-L-seryl-[protein] + adenosine 3',5'-bisphosphate + H(+). It carries out the reaction a 3-O-{beta-D-galactosyl-(1-&gt;3)-[N-acetyl-beta-D-glucosaminyl-(1-&gt;6)]-N-acetyl-alpha-D-galactosaminyl}-L-threonyl-[protein] + 3'-phosphoadenylyl sulfate = 3-O-{beta-D-galactosyl-(1-&gt;3)-[6-O-sulfo-N-acetyl-beta-D-glucosaminyl-(1-&gt;6)]-N-acetyl-alpha-D-galactosaminyl}-L-threonyl-[protein] + adenosine 3',5'-bisphosphate + H(+). The enzyme catalyses 3-O-{beta-D-galactosyl-(1-&gt;3)-[N-acetyl-beta-D-glucosaminyl-(1-&gt;6)]-N-acetyl-alpha-D-galactosaminyl}-L-seryl-[protein] + 3'-phosphoadenylyl sulfate = 3-O-{beta-D-galactosyl-(1-&gt;3)-[6-O-sulfo-N-acetyl-beta-D-glucosaminyl-(1-&gt;6)]-N-acetyl-alpha-D-galactosaminyl}-L-seryl-[protein] + adenosine 3',5'-bisphosphate + H(+). It participates in protein modification; carbohydrate sulfation. Sulfotransferase involved in SELL/L-selectin ligand biosynthesis pathway. Catalyzes the transfer of the sulfate group from 3'-phospho-5'-adenylyl sulfate (PAPS) onto the hydroxyl group at C-6 position of the non-reducing N-acetylglucosamine (GlcNAc) residue within O-linked mucin-type glycans. Contributes to generate sialyl 6-sulfo Lewis X determinant (also known as MECA-79 epitope) for SELL recognition, a prerequisite for continuous lymphocyte homing into peripheral lymph nodes and antigen immune surveillance. Transfers the sulfate group primarily on core 2 GlcNAcbeta1-6(Galbeta1-3)GalNAcalphaSer/Thr and extended core 1 GlcNAcbeta1-3Galbeta1-3GalNAcalphaSer/Thr based O-linked glycans on CD34 and GLYCAM1 peripheral node addressins (PNAds) expressed on the lumenal side of high endothelial venules (HEVs). The recognition of PNAds by SELL initiates a multistep process comprising tethering and rolling of blood lymphocytes on HEVs against the blood flow, followed by chemokine signaling, integrin-mediated lymphocyte adhesion onto endothelial cells and lymphocyte transendothelial migration. Modulates rolling velocity and differential T and B lymphocyte recruitment into peripheral lymph nodes, with a major role in B lymphocyte homing. Might be redundant in sulfation of MADCAM1 and lymphocyte trafficking to mesenteric lymph nodes. Can also sulfonate core 3 GlcNAcbeta1-3GalNAc-R based glycans as well as GlcNAcbeta1-3Galbeta1-Glc, GlcNAcbeta1-6ManOMe and GlcNAcbeta1-2Man oligosaccharides, which might be ectopically expressed during tumorigenesis. This chain is Carbohydrate sulfotransferase 4 (Chst4), found in Mus musculus (Mouse).